Here is a 434-residue protein sequence, read N- to C-terminus: D-amino acid dehydrogenase (434 aa).

3 to 17 lines the FAD pocket; the sequence is VLVLGSGVIGTTSAW.

This sequence belongs to the DadA oxidoreductase family. Requires FAD as cofactor.

It catalyses the reaction a D-alpha-amino acid + A + H2O = a 2-oxocarboxylate + AH2 + NH4(+). It functions in the pathway amino-acid degradation; D-alanine degradation; NH(3) and pyruvate from D-alanine: step 1/1. Its function is as follows. Oxidative deamination of D-amino acids. This chain is D-amino acid dehydrogenase, found in Stenotrophomonas maltophilia (strain K279a).